The primary structure comprises 131 residues: Small ribosomal subunit protein eS17 (131 aa).

Belongs to the eukaryotic ribosomal protein eS17 family.

In Drosophila melanogaster (Fruit fly), this protein is Small ribosomal subunit protein eS17 (RpS17).